The following is a 242-amino-acid chain: Ribosomal RNA large subunit methyltransferase E (242 aa).

5 residues coordinate S-adenosyl-L-methionine: glycine 64, tryptophan 66, aspartate 84, aspartate 100, and aspartate 125. Lysine 165 functions as the Proton acceptor in the catalytic mechanism. Positions 198–242 are disordered; that stretch reads SSETFLLGRGLKKASPNGLDSRSGTAAEPAPLVPIGTNSMPANGD. Over residues 233 to 242 the composition is skewed to polar residues; the sequence is GTNSMPANGD.

Belongs to the class I-like SAM-binding methyltransferase superfamily. RNA methyltransferase RlmE family.

It localises to the cytoplasm. It carries out the reaction uridine(2552) in 23S rRNA + S-adenosyl-L-methionine = 2'-O-methyluridine(2552) in 23S rRNA + S-adenosyl-L-homocysteine + H(+). Functionally, specifically methylates the uridine in position 2552 of 23S rRNA at the 2'-O position of the ribose in the fully assembled 50S ribosomal subunit. The chain is Ribosomal RNA large subunit methyltransferase E from Verminephrobacter eiseniae (strain EF01-2).